The primary structure comprises 133 residues: Small ribosomal subunit protein uS8 (133 aa).

This sequence belongs to the universal ribosomal protein uS8 family. In terms of assembly, part of the 30S ribosomal subunit. Contacts proteins S5 and S12.

Functionally, one of the primary rRNA binding proteins, it binds directly to 16S rRNA central domain where it helps coordinate assembly of the platform of the 30S subunit. In Deinococcus geothermalis (strain DSM 11300 / CIP 105573 / AG-3a), this protein is Small ribosomal subunit protein uS8.